The following is a 267-amino-acid chain: Serine/threonine-protein kinase 1 (267 aa).

Positions 18–266 (IQNNVRLVDG…YETVIKHSFL (249 aa)) constitute a Protein kinase domain. ATP is bound by residues 24–32 (LVDGKFGKM) and Lys-47. The active-site Proton acceptor is Asp-134.

This sequence belongs to the protein kinase superfamily. Ser/Thr protein kinase family.

It catalyses the reaction L-seryl-[protein] + ATP = O-phospho-L-seryl-[protein] + ADP + H(+). It carries out the reaction L-threonyl-[protein] + ATP = O-phospho-L-threonyl-[protein] + ADP + H(+). The chain is Serine/threonine-protein kinase 1 (PK1) from Heliothis zea nuclear polyhedrosis virus (HzSNPV).